Consider the following 682-residue polypeptide: uncharacterized protein (682 aa).

The 204-residue stretch at 284–487 (VVNILADRLI…KDKDIAEYIV (204 aa)) folds into the MCM domain. 329–336 (TDPGIGKT) contributes to the ATP binding site.

This sequence belongs to the MCM family.

This is an uncharacterized protein from Methanocaldococcus jannaschii (strain ATCC 43067 / DSM 2661 / JAL-1 / JCM 10045 / NBRC 100440) (Methanococcus jannaschii).